A 159-amino-acid polypeptide reads, in one-letter code: MSKKPADGRKVIATNRKARHNYSIIDVYEAGVQLVGTEVKTLREGKASLVDAFATVDDGEVWLRGVHIPQYDHGTWTNHAPLRNRKLLLHRAQIDMLVGKTRDGNLTLVPLSLYFLDGKVKVELALARGKQAHDKRQDIAKRDASREITRELGRRAKGM.

The protein belongs to the SmpB family.

The protein resides in the cytoplasm. Its function is as follows. Required for rescue of stalled ribosomes mediated by trans-translation. Binds to transfer-messenger RNA (tmRNA), required for stable association of tmRNA with ribosomes. tmRNA and SmpB together mimic tRNA shape, replacing the anticodon stem-loop with SmpB. tmRNA is encoded by the ssrA gene; the 2 termini fold to resemble tRNA(Ala) and it encodes a 'tag peptide', a short internal open reading frame. During trans-translation Ala-aminoacylated tmRNA acts like a tRNA, entering the A-site of stalled ribosomes, displacing the stalled mRNA. The ribosome then switches to translate the ORF on the tmRNA; the nascent peptide is terminated with the 'tag peptide' encoded by the tmRNA and targeted for degradation. The ribosome is freed to recommence translation, which seems to be the essential function of trans-translation. This chain is SsrA-binding protein, found in Mycobacteroides abscessus (strain ATCC 19977 / DSM 44196 / CCUG 20993 / CIP 104536 / JCM 13569 / NCTC 13031 / TMC 1543 / L948) (Mycobacterium abscessus).